We begin with the raw amino-acid sequence, 283 residues long: Formamidopyrimidine-DNA glycosylase (283 aa).

P2 functions as the Schiff-base intermediate with DNA in the catalytic mechanism. E3 (proton donor) is an active-site residue. Residue K58 is the Proton donor; for beta-elimination activity of the active site. H100, R119, and R162 together coordinate DNA. The FPG-type zinc finger occupies 247–283; it reads RVYGREGLPCVTPGCSGTVGRIVQSGRSSFHCPLCQR. R273 acts as the Proton donor; for delta-elimination activity in catalysis.

It belongs to the FPG family. In terms of assembly, monomer. Zn(2+) is required as a cofactor.

The catalysed reaction is Hydrolysis of DNA containing ring-opened 7-methylguanine residues, releasing 2,6-diamino-4-hydroxy-5-(N-methyl)formamidopyrimidine.. It carries out the reaction 2'-deoxyribonucleotide-(2'-deoxyribose 5'-phosphate)-2'-deoxyribonucleotide-DNA = a 3'-end 2'-deoxyribonucleotide-(2,3-dehydro-2,3-deoxyribose 5'-phosphate)-DNA + a 5'-end 5'-phospho-2'-deoxyribonucleoside-DNA + H(+). Functionally, involved in base excision repair of DNA damaged by oxidation or by mutagenic agents. Acts as a DNA glycosylase that recognizes and removes damaged bases. Has a preference for oxidized purines, such as 7,8-dihydro-8-oxoguanine (8-oxoG). Has AP (apurinic/apyrimidinic) lyase activity and introduces nicks in the DNA strand. Cleaves the DNA backbone by beta-delta elimination to generate a single-strand break at the site of the removed base with both 3'- and 5'-phosphates. The protein is Formamidopyrimidine-DNA glycosylase of Cereibacter sphaeroides (strain KD131 / KCTC 12085) (Rhodobacter sphaeroides).